A 301-amino-acid polypeptide reads, in one-letter code: Peroxisome assembly protein 26 (301 aa).

Residues 1 to 246 (MKNDSSTSAA…DAAASHLLSQ (246 aa)) are Cytoplasmic-facing. The helical; Signal-anchor for type II membrane protein transmembrane segment at 247–263 (PFKKSLLAALILCLLVL) threads the bilayer. At 264 to 301 (RFDPATPSSLPFLYQLAHLFRRIQKATLSRLYPLALRD) the chain is on the peroxisomal side.

It belongs to the peroxin-26 family. As to quaternary structure, interacts directly with PEX6 via its cytoplasmic domain. Interacts indirectly with PEX1, via its interaction with PEX6.

Its subcellular location is the peroxisome membrane. Peroxisomal docking factor that anchors PEX1 and PEX6 to peroxisome membranes. It is therefore required for the formation of the PEX1-PEX6 AAA ATPase complex, a complex that mediates the extraction of the PEX5 receptor from peroxisomal membrane. This chain is Peroxisome assembly protein 26 (Pex26), found in Cricetulus griseus (Chinese hamster).